The sequence spans 459 residues: Glutathione reductase (459 aa).

FAD is bound by residues Ser-14, Gly-15, Glu-34, Thr-41, Cys-42, Lys-50, and Ala-114. Residue Ser-14 coordinates glutathione. A disulfide bridge connects residues Cys-42 and Cys-47. Residues Ile-177, Glu-180, Arg-197, Lys-203, and Gly-262 each contribute to the NADP(+) site. The FAD site is built by Asp-313 and Thr-321. Arg-329 is a binding site for glutathione. An NADP(+)-binding site is contributed by Ala-351. An FAD-binding site is contributed by His-448. His-448 functions as the Proton acceptor in the catalytic mechanism.

Belongs to the class-I pyridine nucleotide-disulfide oxidoreductase family. As to quaternary structure, homodimer. FAD is required as a cofactor.

The protein resides in the cytoplasm. It catalyses the reaction 2 glutathione + NADP(+) = glutathione disulfide + NADPH + H(+). Its function is as follows. Catalyzes the reduction of glutathione disulfide (GSSG) to reduced glutathione (GSH). Constitutes the major mechanism to maintain a high GSH:GSSG ratio in the cytosol. The polypeptide is Glutathione reductase (gor) (Nostoc sp. (strain PCC 7120 / SAG 25.82 / UTEX 2576)).